The following is a 372-amino-acid chain: MRVMAAMSGGVDSSVAAARLVAEGHEVIGVHLALASTPTTLRVGSRGCCSLEDSGDARRVADALGIPFYVWDFSDRFREDVVDPFINSYEMGETPNPCLRCNEKIKFQALLDRGIALGFDAVATGHYARLKDGELRRAIDDNKDQSYVLGVLNDEQLAHCLFPLGDTRKPDIRKEAEAAGLVTASKPDSHDICFIPDGNTKAFLGNHIGVRSGDLKDQDGNVIGHHDGIYGFTIGQRKGLGLPGPAPDGKPRYVTDIDADTGTVTVGTRDDLRVGRLYADRLIRLDEHEGSTQECQVQVRAHGGVVDATVTIDDGVATIDLHSPLTGVARGQAAVIYRPDPDGDIVLGSGTICDTVSVSKLQPTTAGASSNS.

Residues 6–13 (AMSGGVDS) and leucine 32 contribute to the ATP site. Catalysis depends on cysteine 101, which acts as the Nucleophile. The cysteines at positions 101 and 193 are disulfide-linked. Glycine 125 lines the ATP pocket. The interaction with tRNA stretch occupies residues 143–145 (KDQ). Residue cysteine 193 is the Cysteine persulfide intermediate of the active site.

The protein belongs to the MnmA/TRMU family.

The protein localises to the cytoplasm. It carries out the reaction S-sulfanyl-L-cysteinyl-[protein] + uridine(34) in tRNA + AH2 + ATP = 2-thiouridine(34) in tRNA + L-cysteinyl-[protein] + A + AMP + diphosphate + H(+). Catalyzes the 2-thiolation of uridine at the wobble position (U34) of tRNA, leading to the formation of s(2)U34. The polypeptide is tRNA-specific 2-thiouridylase MnmA (Corynebacterium kroppenstedtii (strain DSM 44385 / JCM 11950 / CIP 105744 / CCUG 35717)).